A 422-amino-acid polypeptide reads, in one-letter code: Serine hydroxymethyltransferase (422 aa).

Residues L120 and 124–126 (GHL) each bind (6S)-5,6,7,8-tetrahydrofolate. K228 carries the post-translational modification N6-(pyridoxal phosphate)lysine.

It belongs to the SHMT family. In terms of assembly, homodimer. Pyridoxal 5'-phosphate is required as a cofactor.

The protein resides in the cytoplasm. The catalysed reaction is (6R)-5,10-methylene-5,6,7,8-tetrahydrofolate + glycine + H2O = (6S)-5,6,7,8-tetrahydrofolate + L-serine. The protein operates within one-carbon metabolism; tetrahydrofolate interconversion. It participates in amino-acid biosynthesis; glycine biosynthesis; glycine from L-serine: step 1/1. Its function is as follows. Catalyzes the reversible interconversion of serine and glycine with tetrahydrofolate (THF) serving as the one-carbon carrier. This reaction serves as the major source of one-carbon groups required for the biosynthesis of purines, thymidylate, methionine, and other important biomolecules. Also exhibits THF-independent aldolase activity toward beta-hydroxyamino acids, producing glycine and aldehydes, via a retro-aldol mechanism. The polypeptide is Serine hydroxymethyltransferase (Actinobacillus succinogenes (strain ATCC 55618 / DSM 22257 / CCUG 43843 / 130Z)).